We begin with the raw amino-acid sequence, 441 residues long: Glutamate--tRNA ligase 1 (441 aa).

The 'HIGH' region signature appears at 8–18; sequence PSPTGYIHIGN. The 'KMSKS' region motif lies at 239 to 243; it reads ALSKR. Residue K242 participates in ATP binding.

It belongs to the class-I aminoacyl-tRNA synthetase family. Glutamate--tRNA ligase type 1 subfamily. As to quaternary structure, monomer.

The protein resides in the cytoplasm. The enzyme catalyses tRNA(Glu) + L-glutamate + ATP = L-glutamyl-tRNA(Glu) + AMP + diphosphate. Catalyzes the attachment of glutamate to tRNA(Glu) in a two-step reaction: glutamate is first activated by ATP to form Glu-AMP and then transferred to the acceptor end of tRNA(Glu). This is Glutamate--tRNA ligase 1 from Roseobacter denitrificans (strain ATCC 33942 / OCh 114) (Erythrobacter sp. (strain OCh 114)).